The chain runs to 212 residues: uncharacterized protein (212 aa).

The tract at residues 1 to 88 (MAEEQKIALE…PAPAKPASAS (88 aa)) is disordered. Residue serine 13 is modified to Phosphoserine. Pro residues predominate over residues 23-41 (ADTPAPAPAEIPAPAPAPT). A compositionally biased stretch (basic and acidic residues) spans 45–54 (VTKDVAEEKI).

Belongs to the remorin family.

The protein localises to the cell membrane. This is an uncharacterized protein from Arabidopsis thaliana (Mouse-ear cress).